Consider the following 280-residue polypeptide: Fe-S cluster assembly protein DRE2 (280 aa).

The N-terminal SAM-like domain stretch occupies residues 1–121; it reads MSNLLVFDNS…TTLLKKSGGG (121 aa). The linker stretch occupies residues 122 to 176; it reads PKKFAFKRASPATAAPSTNGTNPAATVNLNSVVTLSMDDDDLMDEDDLMEDDTNL. Residues cysteine 186, cysteine 198, cysteine 201, and cysteine 203 each contribute to the [2Fe-2S] cluster site. The fe-S binding site A stretch occupies residues 186–203; the sequence is CDPGPGKKRRKACKDCTC. [4Fe-4S] cluster is bound by residues cysteine 244, cysteine 247, cysteine 255, and cysteine 258. Short sequence motifs (cx2C motif) lie at residues 244 to 247 and 255 to 258; these read CGSC and CDGC. Positions 244-258 are fe-S binding site B; it reads CGSCALGDAFRCDGC.

Belongs to the anamorsin family. In terms of assembly, monomer. Interacts with TAH18. Interacts with MIA40. Requires [2Fe-2S] cluster as cofactor. [4Fe-4S] cluster serves as cofactor.

The protein resides in the cytoplasm. It is found in the mitochondrion intermembrane space. Functionally, component of the cytosolic iron-sulfur (Fe-S) protein assembly (CIA) machinery required for the maturation of extramitochondrial Fe-S proteins. Part of an electron transfer chain functioning in an early step of cytosolic Fe-S biogenesis, facilitating the de novo assembly of a [4Fe-4S] cluster on the scaffold complex CFD1-NBP35. Electrons are transferred to DRE2 from NADPH via the FAD- and FMN-containing protein TAH18. TAH18-DRE2 are also required for the assembly of the diferric tyrosyl radical cofactor of ribonucleotide reductase (RNR), probably by providing electrons for reduction during radical cofactor maturation in the catalytic small subunit RNR2. This is Fe-S cluster assembly protein DRE2 from Yarrowia lipolytica (strain CLIB 122 / E 150) (Yeast).